We begin with the raw amino-acid sequence, 394 residues long: Bifunctional enzyme IspD/IspF (394 aa).

The 2-C-methyl-D-erythritol 4-phosphate cytidylyltransferase stretch occupies residues 1-230 (MADTLAIVVA…AEALLGGGPV (230 aa)). The tract at residues 231 to 394 (LVGFGYDVHR…RIVLPGDRVL (164 aa)) is 2-C-methyl-D-erythritol 2,4-cyclodiphosphate synthase. A divalent metal cation-binding residues include Asp237 and His239. Residues 237-239 (DVH) and 263-264 (HS) contribute to the 4-CDP-2-C-methyl-D-erythritol 2-phosphate site. His271 contacts a divalent metal cation. 4-CDP-2-C-methyl-D-erythritol 2-phosphate contacts are provided by residues 285 to 287 (DIG), 290 to 294 (FPDDD), 361 to 364 (TTTE), and Phe368.

In the N-terminal section; belongs to the IspD/TarI cytidylyltransferase family. IspD subfamily. This sequence in the C-terminal section; belongs to the IspF family. The cofactor is a divalent metal cation.

The enzyme catalyses 2-C-methyl-D-erythritol 4-phosphate + CTP + H(+) = 4-CDP-2-C-methyl-D-erythritol + diphosphate. It carries out the reaction 4-CDP-2-C-methyl-D-erythritol 2-phosphate = 2-C-methyl-D-erythritol 2,4-cyclic diphosphate + CMP. The protein operates within isoprenoid biosynthesis; isopentenyl diphosphate biosynthesis via DXP pathway; isopentenyl diphosphate from 1-deoxy-D-xylulose 5-phosphate: step 2/6. Its pathway is isoprenoid biosynthesis; isopentenyl diphosphate biosynthesis via DXP pathway; isopentenyl diphosphate from 1-deoxy-D-xylulose 5-phosphate: step 4/6. Bifunctional enzyme that catalyzes the formation of 4-diphosphocytidyl-2-C-methyl-D-erythritol from CTP and 2-C-methyl-D-erythritol 4-phosphate (MEP) (IspD), and catalyzes the conversion of 4-diphosphocytidyl-2-C-methyl-D-erythritol 2-phosphate (CDP-ME2P) to 2-C-methyl-D-erythritol 2,4-cyclodiphosphate (ME-CPP) with a corresponding release of cytidine 5-monophosphate (CMP) (IspF). This chain is Bifunctional enzyme IspD/IspF, found in Desulforudis audaxviator (strain MP104C).